A 99-amino-acid polypeptide reads, in one-letter code: NADH-quinone oxidoreductase subunit K (99 aa).

3 consecutive transmembrane segments (helical) span residues 3–23 (PANY…GVLV), 28–48 (IVVF…LVTF), and 59–79 (VMAF…LAII).

This sequence belongs to the complex I subunit 4L family. In terms of assembly, NDH-1 is composed of 14 different subunits. Subunits NuoA, H, J, K, L, M, N constitute the membrane sector of the complex.

It is found in the cell membrane. It catalyses the reaction a quinone + NADH + 5 H(+)(in) = a quinol + NAD(+) + 4 H(+)(out). Its function is as follows. NDH-1 shuttles electrons from NADH, via FMN and iron-sulfur (Fe-S) centers, to quinones in the respiratory chain. The immediate electron acceptor for the enzyme in this species is believed to be a menaquinone. Couples the redox reaction to proton translocation (for every two electrons transferred, four hydrogen ions are translocated across the cytoplasmic membrane), and thus conserves the redox energy in a proton gradient. The protein is NADH-quinone oxidoreductase subunit K of Frankia alni (strain DSM 45986 / CECT 9034 / ACN14a).